We begin with the raw amino-acid sequence, 111 residues long: ATP-dependent Clp protease adapter protein ClpS (111 aa).

This sequence belongs to the ClpS family. As to quaternary structure, binds to the N-terminal domain of the chaperone ClpA.

Its function is as follows. Involved in the modulation of the specificity of the ClpAP-mediated ATP-dependent protein degradation. The polypeptide is ATP-dependent Clp protease adapter protein ClpS (Leptospira interrogans serogroup Icterohaemorrhagiae serovar copenhageni (strain Fiocruz L1-130)).